The chain runs to 694 residues: Junctophilin-2 (694 aa).

Over 1–672 (MSGGRFDFDD…EVEVEEVPNT (672 aa)) the chain is Cytoplasmic. 6 MORN repeats span residues 14 to 36 (YCGGWEGGKAHGHGLCTGPKGQG), 38 to 59 (YSGSWNFGFEVAGVYTWPSGNT), 60 to 79 (FEGYWSQGKRHGLGIETKGR), 82 to 104 (YKGEWTHGFKGRYGTRQSTSSGA), 106 to 128 (YEGTWNNGLQDGYGTETYADGGT), and 129 to 151 (YQGQFTNGMRHGYGVRQSVPYGM). Residues serine 162 and serine 165 each carry the phosphoserine modification. Disordered stretches follow at residues 164–192 (SSLRSEHSNGTVAPDSPASPAADGPALPS) and 231–278 (RAES…AAPF). Residues 176-189 (APDSPASPAADGPA) are compositionally biased toward low complexity. A compositionally biased stretch (polar residues) spans 235 to 244 (RTSVGSQRSR). A compositionally biased stretch (low complexity) spans 250–267 (SDLSSGASDAASTASLGE). 2 MORN repeats span residues 290–312 (YMGEWKNDKRSGFGVSERSSGLR) and 313–335 (YEGEWLDNLRHGYGCTTLPDGHR). The short motif at 350–364 (KRRVLPLKSNKVRQK) is the Bipartite nuclear localization signal element. A phosphoserine mark is found at serine 445, serine 447, and serine 466. The tract at residues 448 to 663 (LLEPPDRGAA…KEAAQAAEAE (216 aa)) is disordered. Positions 467-476 (PQLHERETPR) are enriched in basic and acidic residues. Threonine 474 carries the post-translational modification Phosphothreonine. Pro residues predominate over residues 478 to 491 (EGGPPSPAGTPPQP). A Phosphoserine modification is found at serine 483. Threonine 487 carries the phosphothreonine modification. The Nuclear localization signal motif lies at 492-496 (KRPRP). Low complexity predominate over residues 522-540 (SRPATPAAAGAGRRSPARP). 4 positions are modified to phosphoserine: serine 536, serine 542, serine 596, and serine 600. A compositionally biased stretch (low complexity) spans 589 to 610 (PEAADPDSAPASPATAPGQAPA). A helical; Anchor for type IV membrane protein membrane pass occupies residues 673-693 (VLICMVILLNIGLAILFVHLL).

It belongs to the junctophilin family. In terms of assembly, interacts with TRPC3. Interacts with BAG5 and HSPA8; the interaction with HSPA8 is increased in the presence of BAG5. Junctophilin-2 N-terminal fragment: Interacts with MEF2C. Post-translationally, proteolytically cleaved by calpain in response to cardiac stress. The major cleavage site takes place at the C-terminus and leads to the release of the Junctophilin-2 N-terminal fragment chain (JP2NT). Phosphorylation on Ser-165, probably by PKC, affects RYR1-mediated calcium ion release, interaction with TRPC3, and skeletal muscle myotubule development.

It is found in the cell membrane. The protein resides in the sarcoplasmic reticulum membrane. The protein localises to the endoplasmic reticulum membrane. Its subcellular location is the nucleus. Membrane-binding protein that provides a structural bridge between the plasma membrane and the sarcoplasmic reticulum and is required for normal excitation-contraction coupling in cardiomyocytes. Provides a structural foundation for functional cross-talk between the cell surface and intracellular Ca(2+) release channels by maintaining the 12-15 nm gap between the sarcolemma and the sarcoplasmic reticulum membranes in the cardiac dyads. Necessary for proper intracellular Ca(2+) signaling in cardiac myocytes via its involvement in ryanodine receptor-mediated calcium ion release. Contributes to the construction of skeletal muscle triad junctions. Functionally, transcription repressor required to safeguard against the deleterious effects of cardiac stress. Generated following cleavage of the Junctophilin-2 chain by calpain in response to cardiac stress in cardiomyocytes. Following cleavage and release from the membrane, translocates to the nucleus, binds DNA and represses expression of genes implicated in cell growth and differentiation, hypertrophy, inflammation and fibrosis. Modifies the transcription profile and thereby attenuates pathological remodeling in response to cardiac stress. Probably acts by competing with MEF2 transcription factors and TATA-binding proteins. This chain is Junctophilin-2 (JPH2), found in Oryctolagus cuniculus (Rabbit).